The sequence spans 706 residues: Signal transducer and activator of transcription 1 (706 aa).

The SH2 domain maps to 477-574 (WCIGFISKND…EEMLRFFESE (98 aa)).

The protein belongs to the transcription factor STAT family. Forms a homodimer or a heterodimer with a related family member. Expressed in adult and larval pharynx, head ganglia, tail ganglia, ventral nerve cord and body muscles.

It localises to the cytoplasm. The protein localises to the nucleus. Its function is as follows. Carries out a dual function: signal transduction and activation of transcription. Activated STAT proteins play a role in repression of dauer formation. Neuronal expression is held in check by negative signals through the TGF-beta pathway that target the daf-3 transcription factor. This is Signal transducer and activator of transcription 1 from Caenorhabditis elegans.